A 152-amino-acid polypeptide reads, in one-letter code: Deoxyuridine 5'-triphosphate nucleotidohydrolase (152 aa).

Substrate-binding positions include 72–74, N85, and 89–91; these read RSG and TID.

This sequence belongs to the dUTPase family. The cofactor is Mg(2+).

The catalysed reaction is dUTP + H2O = dUMP + diphosphate + H(+). It participates in pyrimidine metabolism; dUMP biosynthesis; dUMP from dCTP (dUTP route): step 2/2. Its function is as follows. This enzyme is involved in nucleotide metabolism: it produces dUMP, the immediate precursor of thymidine nucleotides and it decreases the intracellular concentration of dUTP so that uracil cannot be incorporated into DNA. The chain is Deoxyuridine 5'-triphosphate nucleotidohydrolase from Rhodopseudomonas palustris (strain HaA2).